The primary structure comprises 455 residues: tRNA modification GTPase MnmE (455 aa).

Arg-23, Glu-85, and Arg-124 together coordinate (6S)-5-formyl-5,6,7,8-tetrahydrofolate. In terms of domain architecture, TrmE-type G spans 220 to 375; sequence GVSVVIAGKP…LQDAIFEAFI (156 aa). Asn-230 is a binding site for K(+). Residues 230-235, 249-255, and 274-277 each bind GTP; these read NVGKSS, TSVPGTT, and DTAG. Ser-234 serves as a coordination point for Mg(2+). Residues Thr-249, Val-251, and Thr-254 each contribute to the K(+) site. Thr-255 provides a ligand contact to Mg(2+). Position 455 (Lys-455) interacts with (6S)-5-formyl-5,6,7,8-tetrahydrofolate.

The protein belongs to the TRAFAC class TrmE-Era-EngA-EngB-Septin-like GTPase superfamily. TrmE GTPase family. Homodimer. Heterotetramer of two MnmE and two MnmG subunits. Requires K(+) as cofactor.

Its subcellular location is the cytoplasm. In terms of biological role, exhibits a very high intrinsic GTPase hydrolysis rate. Involved in the addition of a carboxymethylaminomethyl (cmnm) group at the wobble position (U34) of certain tRNAs, forming tRNA-cmnm(5)s(2)U34. The sequence is that of tRNA modification GTPase MnmE from Geotalea uraniireducens (strain Rf4) (Geobacter uraniireducens).